The primary structure comprises 169 residues: Positive control factor (169 aa).

Positions 132 to 157 form a DNA-binding region, H-T-H motif; that stretch reads YERIADLLGVKKSTVQTTIKRASLKM.

Functionally, positive regulatory protein that acts at the late promoter PL. In Bacillus subtilis (strain 168), this protein is Positive control factor (xpf).